Reading from the N-terminus, the 159-residue chain is Small ribosomal subunit protein uS9 (159 aa).

The protein belongs to the universal ribosomal protein uS9 family.

The chain is Small ribosomal subunit protein uS9 from Rickettsia rickettsii (strain Iowa).